The chain runs to 460 residues: V-type ATP synthase beta chain 2 (460 aa).

It belongs to the ATPase alpha/beta chains family.

Functionally, produces ATP from ADP in the presence of a proton gradient across the membrane. The V-type beta chain is a regulatory subunit. This chain is V-type ATP synthase beta chain 2, found in Clostridium tetani (strain Massachusetts / E88).